Reading from the N-terminus, the 150-residue chain is 3-dehydroquinate dehydratase (150 aa).

Tyr26 (proton acceptor) is an active-site residue. 3 residues coordinate substrate: Asn77, His83, and Asp90. Catalysis depends on His103, which acts as the Proton donor. Residues 104–105 (LS) and Arg114 contribute to the substrate site.

Belongs to the type-II 3-dehydroquinase family. Homododecamer.

The catalysed reaction is 3-dehydroquinate = 3-dehydroshikimate + H2O. The protein operates within metabolic intermediate biosynthesis; chorismate biosynthesis; chorismate from D-erythrose 4-phosphate and phosphoenolpyruvate: step 3/7. Its function is as follows. Catalyzes a trans-dehydration via an enolate intermediate. In Citrobacter koseri (strain ATCC BAA-895 / CDC 4225-83 / SGSC4696), this protein is 3-dehydroquinate dehydratase.